We begin with the raw amino-acid sequence, 80 residues long: Conotoxin Bu3 (80 aa).

A signal peptide spans 1–22; sequence MKLMCVLIVSVLVLTACQLSTA. A propeptide spanning residues 23 to 51 is cleaved from the precursor; the sequence is DDTRDKQKDRLVRLFRKKRDSSDSGLLPR. 3 disulfide bridges follow: C53–C69, C60–C72, and C68–C79.

This sequence belongs to the conotoxin O1 superfamily. In terms of tissue distribution, expressed by the venom duct.

The protein localises to the secreted. In Conus bullatus (Bubble cone), this protein is Conotoxin Bu3.